Consider the following 331-residue polypeptide: D-alanine--D-alanine ligase (331 aa).

One can recognise an ATP-grasp domain in the interval 112-314; it reads KRIWRSEGLP…YEDLCLRLLA (203 aa). 138–193 lines the ATP pocket; the sequence is LQTLGAPMIVKPAREGSTIGLSKVHQAQQCASAYLLAARYDPEVLCEQFIAGDELT. Mg(2+) contacts are provided by aspartate 267, glutamate 281, and asparagine 283.

It belongs to the D-alanine--D-alanine ligase family. The cofactor is Mg(2+). Requires Mn(2+) as cofactor.

The protein localises to the cytoplasm. The catalysed reaction is 2 D-alanine + ATP = D-alanyl-D-alanine + ADP + phosphate + H(+). Its pathway is cell wall biogenesis; peptidoglycan biosynthesis. Cell wall formation. The protein is D-alanine--D-alanine ligase of Verminephrobacter eiseniae (strain EF01-2).